The sequence spans 587 residues: Arginine--tRNA ligase (587 aa).

Residues 127-137 (ANPTGPLHVGH) carry the 'HIGH' region motif.

Belongs to the class-I aminoacyl-tRNA synthetase family. In terms of assembly, monomer.

It is found in the cytoplasm. The enzyme catalyses tRNA(Arg) + L-arginine + ATP = L-arginyl-tRNA(Arg) + AMP + diphosphate. In Dechloromonas aromatica (strain RCB), this protein is Arginine--tRNA ligase.